A 137-amino-acid chain; its full sequence is Universal stress protein HP_0031 (137 aa).

This sequence belongs to the universal stress protein A family.

This chain is Universal stress protein HP_0031, found in Helicobacter pylori (strain ATCC 700392 / 26695) (Campylobacter pylori).